The chain runs to 497 residues: COP9 signalosome complex subunit 3 (497 aa).

The 176-residue stretch at 233–408 folds into the PCI domain; sequence QAFDAFERCV…DGSPAYLTFL (176 aa).

The protein belongs to the CSN3 family. As to quaternary structure, component of the COP9 signalosome (CSN) complex.

It is found in the cytoplasm. The protein localises to the nucleus. Functionally, component of the COP9 signalosome (CSN) complex that acts as an regulator of the ubiquitin (Ubl) conjugation pathway by mediating the deneddylation of the cullin subunit of SCF-type E3 ubiquitin-protein ligase complexes. The CSN complex is involved in the regulation of the circadian clock through its control of the stability of the SCF(FWD1) complex. The polypeptide is COP9 signalosome complex subunit 3 (csn-3) (Neurospora crassa (strain ATCC 24698 / 74-OR23-1A / CBS 708.71 / DSM 1257 / FGSC 987)).